The chain runs to 269 residues: uncharacterized protein (269 aa).

Positions 5–73 constitute an HTH gntR-type domain; sequence APKWRELADR…RGHGTVVRRK (69 aa). Positions 33 to 52 form a DNA-binding region, H-T-H motif; sequence IRDLVEAGEGSKETVHRAYK.

Functionally, the imp locus inhibits the extrachromosomal maintenance of the Streptomyces plasmid SLP1. This is an uncharacterized protein from Streptomyces coelicolor (strain ATCC BAA-471 / A3(2) / M145).